A 123-amino-acid polypeptide reads, in one-letter code: Small ribosomal subunit protein uS12 (123 aa).

Aspartate 89 is subject to 3-methylthioaspartic acid.

Belongs to the universal ribosomal protein uS12 family. As to quaternary structure, part of the 30S ribosomal subunit. Contacts proteins S8 and S17. May interact with IF1 in the 30S initiation complex.

Functionally, with S4 and S5 plays an important role in translational accuracy. In terms of biological role, interacts with and stabilizes bases of the 16S rRNA that are involved in tRNA selection in the A site and with the mRNA backbone. Located at the interface of the 30S and 50S subunits, it traverses the body of the 30S subunit contacting proteins on the other side and probably holding the rRNA structure together. The combined cluster of proteins S8, S12 and S17 appears to hold together the shoulder and platform of the 30S subunit. This is Small ribosomal subunit protein uS12 from Caulobacter sp. (strain K31).